Consider the following 166-residue polypeptide: Deglycase PH1704 (166 aa).

In terms of domain architecture, PfpI endopeptidase spans 1-166; sequence MKVLFLTANE…WMREFVKLLK (166 aa). The active-site Nucleophile is C100. H101 is a catalytic residue.

Belongs to the peptidase C56 family. In terms of assembly, homohexamer formed by a dimer of trimers that assemble into a hollow ring structure.

It is found in the cytoplasm. It carries out the reaction N(omega)-(1-hydroxy-2-oxopropyl)-L-arginyl-[protein] + H2O = lactate + L-arginyl-[protein] + H(+). The enzyme catalyses N(6)-(1-hydroxy-2-oxopropyl)-L-lysyl-[protein] + H2O = lactate + L-lysyl-[protein] + H(+). The catalysed reaction is S-(1-hydroxy-2-oxopropyl)-L-cysteinyl-[protein] + H2O = lactate + L-cysteinyl-[protein] + H(+). It catalyses the reaction N(omega)-(1-hydroxy-2-oxoethyl)-L-arginyl-[protein] + H2O = L-arginyl-[protein] + glycolate + H(+). It carries out the reaction N(6)-(1-hydroxy-2-oxoethyl)-L-lysyl-[protein] + H2O = glycolate + L-lysyl-[protein] + H(+). The enzyme catalyses S-(1-hydroxy-2-oxoethyl)-L-cysteinyl-[protein] + H2O = glycolate + L-cysteinyl-[protein] + H(+). Its function is as follows. Deglycase that catalyzes the deglycation of the Maillard adducts formed between amino groups of proteins and reactive carbonyl groups of glyoxals. Thus, functions as a protein deglycase that repairs methylglyoxal- and glyoxal-glycated proteins, and releases repaired proteins and lactate or glycolate, respectively. Deglycates cysteine, arginine and lysine residues in proteins, and thus reactivates these proteins by reversing glycation by glyoxals. Acts on early glycation intermediates (hemithioacetals and aminocarbinols), preventing the formation of advanced glycation endproducts (AGE) that cause irreversible damage. Also displays proteolytic activity. This is Deglycase PH1704 from Pyrococcus horikoshii (strain ATCC 700860 / DSM 12428 / JCM 9974 / NBRC 100139 / OT-3).